Reading from the N-terminus, the 450-residue chain is Ribosomal protein uS12 methylthiotransferase RimO (450 aa).

Positions 16–126 (PRISFVSLGC…VLDAVHQAVP (111 aa)) constitute an MTTase N-terminal domain. 6 residues coordinate [4Fe-4S] cluster: cysteine 25, cysteine 61, cysteine 90, cysteine 157, cysteine 161, and cysteine 164. Positions 143 to 380 (LTPRHYAYLK…MLKQQAISAR (238 aa)) constitute a Radical SAM core domain. The 67-residue stretch at 383-449 (KRKVGTRQQV…AYDLIGSAVG (67 aa)) folds into the TRAM domain.

The protein belongs to the methylthiotransferase family. RimO subfamily. [4Fe-4S] cluster serves as cofactor.

It is found in the cytoplasm. The enzyme catalyses L-aspartate(89)-[ribosomal protein uS12]-hydrogen + (sulfur carrier)-SH + AH2 + 2 S-adenosyl-L-methionine = 3-methylsulfanyl-L-aspartate(89)-[ribosomal protein uS12]-hydrogen + (sulfur carrier)-H + 5'-deoxyadenosine + L-methionine + A + S-adenosyl-L-homocysteine + 2 H(+). Functionally, catalyzes the methylthiolation of an aspartic acid residue of ribosomal protein uS12. The chain is Ribosomal protein uS12 methylthiotransferase RimO from Azorhizobium caulinodans (strain ATCC 43989 / DSM 5975 / JCM 20966 / LMG 6465 / NBRC 14845 / NCIMB 13405 / ORS 571).